A 159-amino-acid polypeptide reads, in one-letter code: Protein-export protein SecB (159 aa).

It belongs to the SecB family. In terms of assembly, homotetramer, a dimer of dimers. One homotetramer interacts with 1 SecA dimer.

It is found in the cytoplasm. In terms of biological role, one of the proteins required for the normal export of preproteins out of the cell cytoplasm. It is a molecular chaperone that binds to a subset of precursor proteins, maintaining them in a translocation-competent state. It also specifically binds to its receptor SecA. The protein is Protein-export protein SecB of Shewanella amazonensis (strain ATCC BAA-1098 / SB2B).